Here is a 377-residue protein sequence, read N- to C-terminus: Spermidine/putrescine import ATP-binding protein PotA (377 aa).

The region spanning 18-248 (IRLSGISKSF…PKNLFVARFI (231 aa)) is the ABC transporter domain. ATP is bound at residue 50–57 (GPSGCGKT).

The protein belongs to the ABC transporter superfamily. Spermidine/putrescine importer (TC 3.A.1.11.1) family. The complex is composed of two ATP-binding proteins (PotA), two transmembrane proteins (PotB and PotC) and a solute-binding protein (PotD).

The protein localises to the cell inner membrane. It catalyses the reaction ATP + H2O + polyamine-[polyamine-binding protein]Side 1 = ADP + phosphate + polyamineSide 2 + [polyamine-binding protein]Side 1.. Functionally, part of the ABC transporter complex PotABCD involved in spermidine/putrescine import. Responsible for energy coupling to the transport system. This chain is Spermidine/putrescine import ATP-binding protein PotA, found in Vibrio cholerae serotype O1 (strain ATCC 39315 / El Tor Inaba N16961).